Reading from the N-terminus, the 392-residue chain is MALQPASGVRDLNPQQVQRNHELREALAAVYRLWGYEEVAPPRIERMDTLKAGGAIDSRDIVRLVADEPLGLRPEMTASIARAACTRFQNRRRPLRLWSHGTVFEGRQADEGGLCIEEKLHCGVELFGARGVEAELELLSLLMASFKALALPLSEPPQLLIGHTGLMQLLLKNVDEQDHPAYRNCLTQLDRLALRELINTQPQHAHLQQWLDRRGAPDAVISQLKDAFPDAPVLQQLTRLINHLSPLAETTGISLQLDPTFQPMYALYDGIVFQLVCRGTSSPVVVARGGRYDTVVQRLGARGKDATGLGFSFCVDDLRDLPGAFAMTTSRTDRILLCYSQNSSMEQALQAQAGLHRRGLSCQVDHHPCETKAEAEERLREAGCNSLEWVGD.

It belongs to the class-II aminoacyl-tRNA synthetase family. HisZ subfamily. In terms of assembly, heteromultimer composed of HisG and HisZ subunits.

Its subcellular location is the cytoplasm. It participates in amino-acid biosynthesis; L-histidine biosynthesis; L-histidine from 5-phospho-alpha-D-ribose 1-diphosphate: step 1/9. Its function is as follows. Required for the first step of histidine biosynthesis. May allow the feedback regulation of ATP phosphoribosyltransferase activity by histidine. This Synechococcus sp. (strain WH7803) protein is ATP phosphoribosyltransferase regulatory subunit.